A 353-amino-acid chain; its full sequence is Cytochrome c biogenesis protein CcsA (353 aa).

Helical transmembrane passes span 15-35 (FAIL…PNLP), 37-57 (LAAL…TLLG), 68-88 (LSNL…VHLI), 97-117 (LVGV…TMTL), 142-162 (VMML…AFLI), 261-281 (IIGL…VWAN), 288-308 (WSWD…AAYL), and 322-342 (AILA…VNLL).

The protein belongs to the CcmF/CycK/Ccl1/NrfE/CcsA family. As to quaternary structure, may interact with ccs1.

The protein localises to the cellular thylakoid membrane. Functionally, required during biogenesis of c-type cytochromes (cytochrome c6 and cytochrome f) at the step of heme attachment. In Nostoc punctiforme (strain ATCC 29133 / PCC 73102), this protein is Cytochrome c biogenesis protein CcsA.